The primary structure comprises 102 residues: Exocrine gland-secreted peptide 1 (102 aa).

The signal sequence occupies residues 1–22 (MTSLPVLLFLIILLLPSMITEG). C63 and C95 are oxidised to a cystine.

This sequence belongs to the exocrine gland-secreted peptide family. In terms of assembly, monomer. Expressed in the extraorbital lacrimal gland from where it is secreted into tears.

The protein resides in the secreted. Male-specific phermone which is recognized by the Vmn2r116/V2rp5 receptor in the vomeronasal organ (VNO) and enhances female sexual receptive behavior (lordosis) upon male mounting, resulting in successful copulation. In Mus musculus (Mouse), this protein is Exocrine gland-secreted peptide 1.